A 380-amino-acid polypeptide reads, in one-letter code: 3-dehydroquinate synthase (380 aa).

It belongs to the archaeal-type DHQ synthase family.

The enzyme catalyses 2-amino-2,3,7-trideoxy-D-lyxo-hept-6-ulosonate + NAD(+) + H2O = 3-dehydroquinate + NH4(+) + NADH + H(+). Its function is as follows. Catalyzes the oxidative deamination and cyclization of 2-amino-3,7-dideoxy-D-threo-hept-6-ulosonic acid (ADH) to yield 3-dehydroquinate (DHQ), which is fed into the canonical shikimic pathway of aromatic amino acid biosynthesis. This Methanosarcina barkeri (strain Fusaro / DSM 804) protein is 3-dehydroquinate synthase.